The primary structure comprises 55 residues: Large ribosomal subunit protein bL33A (55 aa).

It belongs to the bacterial ribosomal protein bL33 family.

This is Large ribosomal subunit protein bL33A from Mycobacterium ulcerans (strain Agy99).